A 1025-amino-acid chain; its full sequence is MSNGYSTDENFRYLISCFRARVKMYIQVEPVLDYLTFLPAEVKEQIQRTVATSGNMQAVELLLSTLEKGVWHLGWTREFVEALRRTGSPLAARYMNPELTDLPSPSFENAHDEYLQLLNLLQPTLVDKLLVRDVLDKCMEEELLTIEDRNRIAAAENNGNESGVRELLKRIVQKENWFSAFLNVLRQTGNNELVQELTGSDCSESNAEIENLSQVDGPQVEEQLLSTTVQPNLEKEVWGMENNSSESSFADSSVVSESDTSLAEGSVSCLDESLGHNSNMGSDSGTMGSDSDEENVAARASPEPELQLRPYQMEVAQPALEGKNIIICLPTGSGKTRVAVYIAKDHLDKKKKASEPGKVIVLVNKVLLVEQLFRKEFQPFLKKWYRVIGLSGDTQLKISFPEVVKSCDIIISTAQILENSLLNLENGEDAGVQLSDFSLIIIDECHHTNKEAVYNNIMRHYLMQKLKNNRLKKENKPVIPLPQILGLTASPGVGGATKQAKAEEHILKLCANLDAFTIKTVKENLDQLKNQIQEPCKKFAIADATREDPFKEKLLEIMTRIQTYCQMSPMSDFGTQPYEQWAIQMEKKAAKEGNRKERVCAEHLRKYNEALQINDTIRMIDAYTHLETFYNEEKDKKFAVIEDDSDEGGDDEYCDGDEDEDDLKKPLKLDETDRFLMTLFFENNKMLKRLAENPEYENEKLTKLRNTIMEQYTRTEESARGIIFTKTRQSAYALSQWITENEKFAEVGVKAHHLIGAGHSSEFKPMTQNEQKEVISKFRTGKINLLIATTVAEEGLDIKECNIVIRYGLVTNEIAMVQARGRARADESTYVLVAHSGSGVIEHETVNDFREKMMYKAIHCVQNMKPEEYAHKILELQMQSIMEKKMKTKRNIAKHYKNNPSLITFLCKNCSVLACSGEDIHVIEKMHHVNMTPEFKELYIVRENKALQKKCADYQINGEIICKCGQAWGTMMVHKGLDLPCLKIRNFVVVFKNNSTKKQYKKWVELPITFPNLDYSECCLFSDED.

CARD domains lie at 7–97 and 110–190; these read TDEN…YMNP and AHDE…QTGN. Glycyl lysine isopeptide (Lys-Gly) (interchain with G-Cter in ISG15) cross-links involve residues K23 and K43. At S88 the chain carries Phosphoserine. The disordered stretch occupies residues 271–307; it reads DESLGHNSNMGSDSGTMGSDSDEENVAARASPEPELQ. Over residues 277–289 the composition is skewed to low complexity; that stretch reads NSNMGSDSGTMGS. A phosphoserine mark is found at S289, S291, and S301. Residues 316-509 form the Helicase ATP-binding domain; sequence AQPALEGKNI…AKAEEHILKL (194 aa). Residues 640-662 form a disordered region; it reads VIEDDSDEGGDDEYCDGDEDEDD. Positions 641-661 are enriched in acidic residues; it reads IEDDSDEGGDDEYCDGDEDED. S645 carries the phosphoserine modification. Residues 700–882 enclose the Helicase C-terminal domain; that stretch reads KLTKLRNTIM…ILELQMQSIM (183 aa). S828 bears the Phosphoserine; by RIOK3 mark. In terms of domain architecture, RLR CTR spans 893–1020; sequence AKHYKNNPSL…PNLDYSECCL (128 aa). Positions 907, 910, 962, and 964 each coordinate Zn(2+).

This sequence belongs to the helicase family. RLR subfamily. Monomer in the absence of ligands and homodimerizes in the presence of dsRNA ligands. Can assemble into helical or linear polymeric filaments on long dsRNA. Interacts with MAVS/IPS1. Interacts (via the CARD domains) with TKFC, the interaction is inhibited by viral infection. Interacts with PCBP2. Interacts with NLRC5. Interacts with PIAS2-beta. Interacts with DDX60. Interacts with ANKRD17. Interacts with IKBKE. Interacts with ATG5 and ATG12, either as ATG5 and ATG12 monomers or as ATG12-ATG5 conjugates. Interacts with ZCCHC3; leading to activate IFIH1/MDA5. Interacts with RNF123. Interacts with DDX3X. Interacts with NOD1; this interaction promotes transcription of antiviral genes and inhibition of viral replication. Interacts with ECSIT; this interaction bridges IFIH1 to the MAVS complex at the mitochondrion. As to quaternary structure, (Microbial infection) Interacts with V protein of paramyxoviruses; these interactions prevent IFN-beta induction, and subsequent establishment of an antiviral state. In terms of assembly, (Microbial infection) Interacts with herpes simplex virus 1 protein US11; this interaction prevents the interaction of MAVS/IPS1 to IFIH1. (Microbial infection) Interacts with Encephalomyocarditis virus protein 2C; this interaction inhibits the induction of the IFN-beta signal pathway. As to quaternary structure, (Microbial infection) Interacts with protease 3C of coxsackievirus A16; this interaction inhibits IFIH1 thereby attenuating type-I IFN production. In terms of assembly, (Microbial infection) Interacts with SARS-COV-2 virus protein NSP3; the interaction antagonizes ISG15-dependent IFIH1 activation via active de-ISGylation. (Microbial infection) Interacts with measles V protein; this interaction is involved in the inhibition of the host type I interferon signaling pathway by the virus. Sumoylated. Sumoylation positively regulates its role in type I interferon induction and is enhanced by PIAS2-beta. In terms of processing, ubiquitinated by RNF125, leading to its degradation by the proteasome. USP17/UPS17L2-dependent deubiquitination positively regulates the receptor. Ubiquitinated by TRIM25 via 'Lys-63'-linked ubiquitination, promoting activation of IFIH1/MDA5. Ubiquitinated by TRIM40 via 'Lys-48'-linked ubiquitination; leading to proteasomal degradation. Ubiquitinated by TRIM65 via 'Lys-63'-linked ubiquitination, promoting activation of IFIH1/MDA5. Post-translationally, ISGylated by ISG15. ISGylation increases upon infection with dengue (DENV) or Zika (ZIKV) viruses. ISGylation at Lys-23 and Lys-43 is dependent of dephosphorylation at Ser-88, regulates mitochondrial translocation and oligomerization. Essential for IFIH1/MDA5-mediated cytokine responses and restriction of virus replication. Phosphorylated at Ser-88. Dephosphorylated by phosphatases PPP11CA/PPP11CC; dephosphorylation precedes and is required for ISGylation. In terms of processing, during apoptosis, processed into 3 cleavage products. The helicase-containing fragment, once liberated from the CARD domains, translocate from the cytoplasm to the nucleus. The processed protein significantly sensitizes cells to DNA degradation. Post-translationally, (Microbial infection) Cleaved and inactivated by the protease 2A of coxsackievirus B3, poliovirus and enterovirus 71 allowing the virus to disrupt the host type I interferon production. Widely expressed, at a low level. Expression is detected at slightly highest levels in placenta, pancreas and spleen and at barely levels in detectable brain, testis and lung.

It is found in the cytoplasm. The protein resides in the nucleus. The protein localises to the mitochondrion. The catalysed reaction is ATP + H2O = ADP + phosphate + H(+). Its function is as follows. Innate immune receptor which acts as a cytoplasmic sensor of viral nucleic acids and plays a major role in sensing viral infection and in the activation of a cascade of antiviral responses including the induction of type I interferons and pro-inflammatory cytokines. Its ligands include mRNA lacking 2'-O-methylation at their 5' cap and long-dsRNA (&gt;1 kb in length). Upon ligand binding it associates with mitochondria antiviral signaling protein (MAVS/IPS1) which activates the IKK-related kinases: TBK1 and IKBKE which phosphorylate interferon regulatory factors: IRF3 and IRF7 which in turn activate transcription of antiviral immunological genes, including interferons (IFNs); IFN-alpha and IFN-beta. Responsible for detecting the Picornaviridae family members such as encephalomyocarditis virus (EMCV), mengo encephalomyocarditis virus (ENMG), and rhinovirus. Detects coronavirus SARS-CoV-2. Can also detect other viruses such as dengue virus (DENV), west Nile virus (WNV), and reovirus. Also involved in antiviral signaling in response to viruses containing a dsDNA genome, such as vaccinia virus. Plays an important role in amplifying innate immune signaling through recognition of RNA metabolites that are produced during virus infection by ribonuclease L (RNase L). May play an important role in enhancing natural killer cell function and may be involved in growth inhibition and apoptosis in several tumor cell lines. In Homo sapiens (Human), this protein is Interferon-induced helicase C domain-containing protein 1.